A 371-amino-acid polypeptide reads, in one-letter code: tRNA-specific 2-thiouridylase MnmA (371 aa).

Residues 13-20 (GMSGGVDS) and Met-39 each bind ATP. The tract at residues 99–101 (NPD) is interaction with target base in tRNA. Cys-104 serves as the catalytic Nucleophile. Cys-104 and Cys-200 are oxidised to a cystine. ATP is bound at residue Gly-128. An interaction with tRNA region spans residues 150–152 (KDQ). Cys-200 acts as the Cysteine persulfide intermediate in catalysis. Residues 308 to 309 (RY) form an interaction with tRNA region.

Belongs to the MnmA/TRMU family.

It localises to the cytoplasm. The enzyme catalyses S-sulfanyl-L-cysteinyl-[protein] + uridine(34) in tRNA + AH2 + ATP = 2-thiouridine(34) in tRNA + L-cysteinyl-[protein] + A + AMP + diphosphate + H(+). Functionally, catalyzes the 2-thiolation of uridine at the wobble position (U34) of tRNA, leading to the formation of s(2)U34. The protein is tRNA-specific 2-thiouridylase MnmA of Bacillus cereus (strain ATCC 14579 / DSM 31 / CCUG 7414 / JCM 2152 / NBRC 15305 / NCIMB 9373 / NCTC 2599 / NRRL B-3711).